We begin with the raw amino-acid sequence, 257 residues long: Global transcriptional regulator CodY (257 aa).

Residues 1–155 (MSLLSKTREL…AATVIGMEIL (155 aa)) form a GAF domain region. Positions 203 to 222 (ASKVADGVGITRSVIVNALR) form a DNA-binding region, H-T-H motif.

Belongs to the CodY family.

Its subcellular location is the cytoplasm. In terms of biological role, DNA-binding global transcriptional regulator which is involved in the adaptive response to starvation and acts by directly or indirectly controlling the expression of numerous genes in response to nutrient availability. During rapid exponential growth, CodY is highly active and represses genes whose products allow adaptation to nutrient depletion. In Staphylococcus aureus (strain bovine RF122 / ET3-1), this protein is Global transcriptional regulator CodY.